A 557-amino-acid polypeptide reads, in one-letter code: Nicotinate phosphoribosyltransferase 2 (557 aa).

The nicotinate site is built by Tyr-31 and Thr-219. His-222 carries the post-translational modification Phosphohistidine. Arg-329 contributes to the nicotinate binding site. Thr-391 is a binding site for 5-phospho-alpha-D-ribose 1-diphosphate.

The protein belongs to the NAPRTase family. It depends on Mg(2+) as a cofactor. The cofactor is Mn(2+). Transiently phosphorylated on a His residue during the reaction cycle. Phosphorylation strongly increases the affinity for substrates and increases the rate of nicotinate D-ribonucleotide production. Dephosphorylation regenerates the low-affinity form of the enzyme, leading to product release.

It catalyses the reaction nicotinate + 5-phospho-alpha-D-ribose 1-diphosphate + ATP + H2O = nicotinate beta-D-ribonucleotide + ADP + phosphate + diphosphate. The protein operates within cofactor biosynthesis; NAD(+) biosynthesis; nicotinate D-ribonucleotide from nicotinate: step 1/1. Its function is as follows. Catalyzes the first step in the biosynthesis of NAD from nicotinic acid, the ATP-dependent synthesis of beta-nicotinate D-ribonucleotide from nicotinate and 5-phospho-D-ribose 1-phosphate. Helps prevent cellular oxidative stress via its role in NAD biosynthesis. The polypeptide is Nicotinate phosphoribosyltransferase 2 (Arabidopsis thaliana (Mouse-ear cress)).